Reading from the N-terminus, the 685-residue chain is Protein arginine N-methyltransferase 7 (685 aa).

SAM-dependent MTase PRMT-type domains are found at residues 14-355 (QATW…YSLW) and 364-685 (AESI…LKSI).

Belongs to the class I-like SAM-binding methyltransferase superfamily. Protein arginine N-methyltransferase family. PRMT7 subfamily.

In terms of biological role, essential arginine methyltransferase that can both catalyze the formation of omega-N monomethylarginine (MMA) and symmetrical dimethylarginine (sDMA). Specifically mediates the symmetrical dimethylation of arginine residues in the small nuclear ribonucleoproteins SmD1 and SmD3. The sequence is that of Protein arginine N-methyltransferase 7 (Art7) from Drosophila willistoni (Fruit fly).